The sequence spans 674 residues: Carcinine transporter (674 aa).

The Cytoplasmic segment spans residues 1-53 (MSDIEDNDGDEYDELSELRQRHKPESQPSVDEAFDLDDLLPTIGEFGKYQKLL). A helical transmembrane segment spans residues 54–74 (VFGICLPACIPCGFCAFNQLF). At 75–178 (MADTPDDYWC…DLVCDQDIYP (104 aa)) the chain is on the extracellular side. N122, N141, and N156 each carry an N-linked (GlcNAc...) asparagine glycan. A helical transmembrane segment spans residues 179–199 (TIGLAALNTGGPVGVYLFGLL). Over 200–206 (NDRGGRR) the chain is Cytoplasmic. A helical membrane pass occupies residues 207–227 (LSYFVCLATLLAGSLMTSLSK). Over 228 to 236 (DFWTWAGSR) the chain is Extracellular. The chain crosses the membrane as a helical span at residues 237-257 (VIVGLTIPAVYQIPFIISLEL). Residues 258–264 (VGENYRS) are Cytoplasmic-facing. A helical membrane pass occupies residues 265–285 (FVTVMTCTFYTSGIMLLSGVT). At 286–293 (YLERDWVR) the chain is on the extracellular side. Residues 294-314 (LSYITSLPFYAYFLYMFVMPE) form a helical membrane-spanning segment. The Cytoplasmic portion of the chain corresponds to 315 to 385 (SPRWLLMRGR…CRTPNMRLKT (71 aa)). The helical transmembrane segment at 386–406 (ILITLSWFANETVYLGLSYYG) threads the bilayer. Residues 407–414 (PALGTNQY) lie on the Extracellular side of the membrane. Residues 415 to 435 (VSFFLSAVVELPSYLCCWYFM) form a helical membrane-spanning segment. The Cytoplasmic portion of the chain corresponds to 436-441 (DTWGRR). The helical transmembrane segment at 442–462 (WPLSLSMILGGVACVITVMLP) threads the bilayer. Topologically, residues 463-469 (DDAVDET) are extracellular. A helical membrane pass occupies residues 470–490 (LVLYLVSKALLSASFLIIYPF). The Cytoplasmic segment spans residues 491–500 (AGELYPTQVR). Residues 501–521 (GIGIGASSYIGGLGLIGIPFI) traverse the membrane as a helical segment. At 522–527 (TYLGKD) the chain is on the extracellular side. The chain crosses the membrane as a helical span at residues 528–548 (NLKLPLVIMGFLSMLGGMTGL). The Cytoplasmic segment spans residues 549-674 (RLPETLHHRL…DGTMQLTHWI (126 aa)). The segment covering 614–631 (RDSRRVREPAPRIDERTP) has biased composition (basic and acidic residues). The interval 614 to 647 (RDSRRVREPAPRIDERTPLDTTASGSGRPVHRPS) is disordered.

It belongs to the major facilitator (TC 2.A.1) superfamily. Organic cation transporter (TC 2.A.1.19) family. As to expression, expressed in photoreceptor cells.

It localises to the cell membrane. The protein resides in the cell projection. Its subcellular location is the axon. Its function is as follows. Carcinine transporter which is required for recycling of the neurotransmitter histamine in photoreceptor neurons of the compound eye. Following histamine release from photoreceptors and its uptake by glia where it is converted to carcinine, required for the uptake of carcinine from glia into photoreceptor cells where it can be hydrolyzed by tan to form histamine and beta-alanine. The polypeptide is Carcinine transporter (Drosophila melanogaster (Fruit fly)).